Reading from the N-terminus, the 229-residue chain is Enolase-phosphatase E1 (229 aa).

It belongs to the HAD-like hydrolase superfamily. MasA/MtnC family. Monomer. Mg(2+) serves as cofactor.

The enzyme catalyses 5-methylsulfanyl-2,3-dioxopentyl phosphate + H2O = 1,2-dihydroxy-5-(methylsulfanyl)pent-1-en-3-one + phosphate. It functions in the pathway amino-acid biosynthesis; L-methionine biosynthesis via salvage pathway; L-methionine from S-methyl-5-thio-alpha-D-ribose 1-phosphate: step 3/6. It participates in amino-acid biosynthesis; L-methionine biosynthesis via salvage pathway; L-methionine from S-methyl-5-thio-alpha-D-ribose 1-phosphate: step 4/6. Its function is as follows. Bifunctional enzyme that catalyzes the enolization of 2,3-diketo-5-methylthiopentyl-1-phosphate (DK-MTP-1-P) into the intermediate 2-hydroxy-3-keto-5-methylthiopentenyl-1-phosphate (HK-MTPenyl-1-P), which is then dephosphorylated to form the acireductone 1,2-dihydroxy-3-keto-5-methylthiopentene (DHK-MTPene). This is Enolase-phosphatase E1 from Yersinia enterocolitica serotype O:8 / biotype 1B (strain NCTC 13174 / 8081).